A 333-amino-acid polypeptide reads, in one-letter code: MGVPLLDVSQLQAGPEARKQYLQALVQSFRDYGFVRLTKHDVPAKRVQRIFDLSTQMFNLDIDSKLEFANIADGSPQRGYSAVGVEKTASLHGNLIGRRVDEKLTDAREHFDCGSPLDKSFANRWPEKLQGFQQELESFYFELEQVTAGILGSLEEALNCPPGTLNNMITKENNASELRLNHYPPVPAGTLRNGNVARIWPHFDLGVITLLFTSAVGGLEVEDRNAPGPQTFIPVEPETEAELIVNISETLQRWTDDHLPAGLHRVTIPKDLDTEIQNDANVEIPGRYSIAYLCKADREADVGTLPVFQTGEAPRYKAMTASEYHRSRLLTAY.

Residues 174-296 enclose the Fe2OG dioxygenase domain; that stretch reads NASELRLNHY…RYSIAYLCKA (123 aa). Residues H202, D204, and H264 each coordinate Fe cation. R287 lines the 2-oxoglutarate pocket.

Belongs to the iron/ascorbate-dependent oxidoreductase family. Fe(2+) serves as cofactor.

It functions in the pathway mycotoxin biosynthesis. Functionally, 2-oxoglutarate-dependent dioxygenase; part of the gene cluster that mediates the biosynthesis of UCS1025A, a member of the pyrrolizidinone family that acts as a strong telomerase inhibitor and displays potent antibacterial and antitumor properties. These compounds share a hemiaminal-containing pyrrolizidinone core fused with a gamma-lactone, giving a furopyrrolizidine that is connected to a decalin fragment. The polyketide synthase module (PKS) of the PKS-NRPS ucsA is responsible for the synthesis of the polyketide backbone via the condensation of an acetyl-CoA starter unit with 6 malonyl-CoA units. The downstream nonribosomal peptide synthetase (NRPS) module then amidates the carboxyl end of the polyketide with a 2S,3S-methylproline derived from L-isoleucine by the 2-oxoglutarate-dependent dioxygenase ucsF which converts L-isoleucine to (4S,5S)-4-methylpyrroline-5-carboxylate that is further converted to 2S,3S-methylproline by the pyrroline-5-carboxylate reductase ucsG. Reductive release of the completed aminoacyl polyketide from the assembly line can form the 3-pyrrolin-2-one structure via an intramolecular Knoevenagel reaction. Because ucsA lacks a designated enoylreductase (ER) domain, the required activity is provided the enoyl reductase ucsL. This keto acyclic precursor is the substrate of the Diels-Alderase ucsH, that catalyzes the Diels-Alder cycloaddition. Oxidation of the 3S-methyl group to a carboxylate by the cytochrome P450 monooxygenase ucsK allows an oxa-Michael cyclization that might involve the reductase/dehydrogenase ucsI and which furnishes the furopyrrolizidine. The oxidase ucsJ likely plays a critical role in stereoselective reduction of the C5-C6 double bond to afford the required R-configured carboxylate group. Further enolization and oxidation at C5 by an unidentified enzyme affords the last intermediate that can undergo oxa-Michael cyclization to yield UCS1025A. This is 2-oxoglutarate-dependent dioxygenase ucsF from Acremonium sp.